The primary structure comprises 526 residues: Delayed-rectifier potassium channel regulatory subunit KCNS1 (526 aa).

Residues 1-217 (MLMLLVRGTH…LTMENPGYSL (217 aa)) are Cytoplasmic-facing. The chain crosses the membrane as a helical span at residues 218–239 (PSKLFSCVSISVVLASIAAMCI). Topologically, residues 240–270 (HSLPEYQAREAAAAVAAVAAGRSPEGVRDDP) are extracellular. A helical membrane pass occupies residues 271–293 (VLRRLEYFCIAWFSFEVSSRLLL). The Cytoplasmic portion of the chain corresponds to 294 to 304 (APSTRNFFCHP). Residues 305 to 322 (LNLIDIVSVLPFYLTLLA) form a helical membrane-spanning segment. Residues 323–337 (GVALGDQGGKEFGHL) lie on the Extracellular side of the membrane. The helical; Voltage-sensor transmembrane segment at 338–358 (GKVVQVFRLMRIFRVLKLARH) threads the bilayer. Residues 359–373 (STGLRSLGATLKHSY) are Cytoplasmic-facing. Residues 374 to 395 (REVGILLLYLAVGVSVFSGVAY) traverse the membrane as a helical segment. The Extracellular portion of the chain corresponds to 396–408 (TAEKEEDVGFNTI). The segment at residues 409-420 (PACWWWGTVSMT) is an intramembrane region (helical). The Selectivity filter motif lies at 421–426 (TVGYGD). The stretch at 421–428 (TVGYGDVV) is an intramembrane region. Topologically, residues 429–435 (PVTVAGK) are extracellular. A helical transmembrane segment spans residues 436-464 (LAASGCILGGILVVALPITIIFNKFSHFY). Residues 465-526 (RRQKALEAAV…PSEPPHPQMY (62 aa)) are Cytoplasmic-facing. A disordered region spans residues 491 to 526 (GVSEASLETSRETSQEGRSADLESQAPSEPPHPQMY). Positions 499–511 (TSRETSQEGRSAD) are enriched in basic and acidic residues.

It belongs to the potassium channel family. S (TC 1.A.1.2) subfamily. Kv9.1/KCNS1 sub-subfamily. In terms of assembly, heterotetramer with KCNB1. Heterotetramer with KCNB2. Does not form homomultimers.

It is found in the cell membrane. Potassium channel regulatory subunit that modulate the delayed rectifier voltage-gated potassium channel activity of KCNB1 and KCNB2 by altering their kinetics, expression levels, and shifting the half-inactivation potential to more polarized values. While it does not form functional channels on its own, it can form functional heterotetrameric channels with KCNB1 and KCNB2. Each regulatory subunit has unique regulatory properties that can lead to extensive inhibition, significant changes in kinetics, and/or substantial shifts in the voltage dependencies of the inactivation process. The polypeptide is Delayed-rectifier potassium channel regulatory subunit KCNS1 (Pongo abelii (Sumatran orangutan)).